Consider the following 859-residue polypeptide: MQEQYNPSEIEALVQKHWHDNKTFEVTEDANKEKFYCLSMFPYPSGRLHMGHVRNYTIGDVVARFQRLQGKNVLQPIGWDSFGLPAENAAINNKTAPAPWTYQNIEYMKNQLKLLGFGYDWSREIATCTPEYYRWEQWFFTKLYEKGLVYKKTASVNWCPNDETVLANEQVQDGCCWRCDTPVEQKEIPQWFIKITAYAEELLNDIDTLDGWPEQVKTMQRNWIGRSEGVEMTFGVAGSDKSFDIYTTRPDTLMGVTYVAIAAGHPLAELAAQTNPELAQFIEECKNSTTSEADLATMEKRGVATGLYAIHPITGKQVPIWAANFVLMNYGTGAVMSVPGHDQRDYEFAKKYNLPIEAVIKPVDGELDISEAAYTEKGVLFNSGEFDGLDFDGAFNAIADKLVAEGKGKRQVNYRLRDWGVSRQRYWGAPIPMVTLADGTVIPTPEDQLPVILPEDVVMDGIQSPIKADKEWAKTQVNGQDALRETDTFDTFMESSWYYARYCSPQADQMLDPTKANYWLPVDQYIGGIEHACMHLLYFRFFHKLLRDAGLVNSNEPAKQLLTQGMVLADAFYYTNDKGARVWVSPLDVVTTEKDDKGRVTKAIDKDGNELVYTGMCKMSKSKNNGIDPQVMVEKYGADTVRLFMMFASPPELTLEWQESGVEGAHRFIKRLWKLASDYVAQDNSEALDVSKLTSEQKALRREVHKTIAKVTDDIGRRQMFNTAVAAVMELMNHLQKAPQTTGQDRAIIGEALTAVVRLLYPIIPHVSFTLWNELGNTNSIEDSQWPVVDESALVEDSKLIVVQVNGKVRAKITVAADADQASVEALGMADEQVIKYLDGVTVRKVIYVPGKLLSIVAN.

The 'HIGH' region signature appears at 42-52; it reads PYPSGRLHMGH. The 'KMSKS' region motif lies at 618 to 622; the sequence is KMSKS. Lys-621 provides a ligand contact to ATP.

Belongs to the class-I aminoacyl-tRNA synthetase family.

It localises to the cytoplasm. The catalysed reaction is tRNA(Leu) + L-leucine + ATP = L-leucyl-tRNA(Leu) + AMP + diphosphate. The polypeptide is Leucine--tRNA ligase (Shewanella sp. (strain ANA-3)).